The sequence spans 182 residues: Probable peptidyl-prolyl cis-trans isomerase A (182 aa).

The 169-residue stretch at 13 to 181 (ATATATLHTN…DPVVIESITI (169 aa)) folds into the PPIase cyclophilin-type domain.

This sequence belongs to the cyclophilin-type PPIase family.

The protein resides in the cytoplasm. It catalyses the reaction [protein]-peptidylproline (omega=180) = [protein]-peptidylproline (omega=0). Its function is as follows. PPIases accelerate the folding of proteins. It catalyzes the cis-trans isomerization of proline imidic peptide bonds in oligopeptides. This chain is Probable peptidyl-prolyl cis-trans isomerase A (ppiA), found in Mycobacterium bovis (strain ATCC BAA-935 / AF2122/97).